Reading from the N-terminus, the 314-residue chain is MKKKIVEYEVGEQVDVFLLIKTATKGLASNGKPFLTVILQDPSGDIEAKLWDVSPEVEKQYVAETIVKVAGDILNYKGRIQLRVKQIRVANENEVTDISDFVEKAPIKKEDMVEKITQYIFEMRNPNIQRLTRHLLNKHQNEFLEYPAAMKNHHEFVSGLAYHVVSMLDLAKAISALYPSLDKDLLYAGVILHDLGKVFELSGPISTTYTLEGNLLGHISIMVNEIGKAAEELQIDAEEVLILQHIVLSHHGKAEWGSPKPPLVKEAEILHYIDNLDAKMNMMDRALGRTKPGEYTERVFALDNRSFYKPTFHN.

One can recognise an HD domain in the interval 163 to 279; the sequence is HVVSMLDLAK…LHYIDNLDAK (117 aa).

The protein belongs to the YhaM family.

Its function is as follows. Shows a 3'-5' exoribonuclease activity. The polypeptide is 3'-5' exoribonuclease YhaM (Bacillus mycoides (strain KBAB4) (Bacillus weihenstephanensis)).